A 461-amino-acid polypeptide reads, in one-letter code: ERBB receptor feedback inhibitor 1 (461 aa).

Residue serine 2 is modified to N-acetylserine. 2 positions are modified to phosphothreonine: threonine 126 and threonine 130. Residues 228–353 are disordered; that stretch reads QNRVVPDPNP…VMPPTQSFAP (126 aa). A phosphoserine mark is found at serine 251 and serine 272. Polar residues predominate over residues 265 to 274; it reads SSCTHRASPS. Over residues 283-292 the composition is skewed to pro residues; the sequence is PPRVPIPPRP. Serine 301 carries the post-translational modification Phosphoserine. Residues 311-324 show a composition bias toward basic and acidic residues; that stretch reads DEDRPPKVPPREPL. Residues 325 to 336 are compositionally biased toward polar residues; sequence SRSNSRTPSPKS. Positions 333 to 362 are interaction with EGFR and ERBB2 and regulation of EGFR activation; that stretch reads SPKSLPSYLNGVMPPTQSFAPDPKYVSSKA. Serine 460 bears the Phosphoserine mark.

This sequence belongs to the MIG6 family. As to quaternary structure, interacts with EGFR. Interacts with ERBB2. Detected in lung, in airway epithelial cells and alveolar type 2 cells (at protein level). Detected in uterus stroma, luminal epithelium and glandular epithelium.

It localises to the cytoplasm. Its subcellular location is the cell membrane. The protein resides in the nucleus. Negative regulator of EGFR signaling in skin morphogenesis. Acts as a negative regulator for several EGFR family members, including ERBB2, ERBB3 and ERBB4. Inhibits EGFR catalytic activity by interfering with its dimerization. Inhibits autophosphorylation of EGFR, ERBB2 and ERBB4. Important for normal keratinocyte proliferation and differentiation. Plays a role in modulating the response to steroid hormones in the uterus. Required for normal response to progesterone in the uterus and for fertility. Mediates epithelial estrogen responses in the uterus by regulating ESR1 levels and activation. Important for regulation of endometrium cell proliferation. Important for normal prenatal and perinatal lung development. This chain is ERBB receptor feedback inhibitor 1 (Errfi1), found in Mus musculus (Mouse).